The sequence spans 155 residues: Ribosomal RNA large subunit methyltransferase H (155 aa).

Residues Leu-72, Gly-103, and 122 to 127 (LSPLTL) each bind S-adenosyl-L-methionine.

This sequence belongs to the RNA methyltransferase RlmH family. As to quaternary structure, homodimer.

It is found in the cytoplasm. The enzyme catalyses pseudouridine(1915) in 23S rRNA + S-adenosyl-L-methionine = N(3)-methylpseudouridine(1915) in 23S rRNA + S-adenosyl-L-homocysteine + H(+). Its function is as follows. Specifically methylates the pseudouridine at position 1915 (m3Psi1915) in 23S rRNA. This is Ribosomal RNA large subunit methyltransferase H from Actinobacillus pleuropneumoniae serotype 3 (strain JL03).